Consider the following 201-residue polypeptide: Small ribosomal subunit protein uS4 (201 aa).

Residues 92 to 155 enclose the S4 RNA-binding domain; the sequence is RRLDAVVYAL…QKLDIIQESV (64 aa).

The protein belongs to the universal ribosomal protein uS4 family. As to quaternary structure, part of the 30S ribosomal subunit. Contacts protein S5. The interaction surface between S4 and S5 is involved in control of translational fidelity.

Functionally, one of the primary rRNA binding proteins, it binds directly to 16S rRNA where it nucleates assembly of the body of the 30S subunit. Its function is as follows. With S5 and S12 plays an important role in translational accuracy. In Staphylococcus carnosus (strain TM300), this protein is Small ribosomal subunit protein uS4.